The primary structure comprises 355 residues: Gibberellin 3-beta-dioxygenase 4 (355 aa).

Residues 203–303 (GRGAIRLNHY…RISIAYLWGG (101 aa)) form the Fe2OG dioxygenase domain. Positions 227, 229, and 284 each coordinate Fe cation. Arg294 is an active-site residue.

This sequence belongs to the iron/ascorbate-dependent oxidoreductase family. GA3OX subfamily. L-ascorbate serves as cofactor. Requires Fe cation as cofactor. In terms of tissue distribution, expressed in siliques and in seeds, specifically at the rim of the embryo and the outer integument. Also expressed in flowers. Not detected in roots, stems and leaves.

It catalyses the reaction gibberellin A20 + 2-oxoglutarate + O2 = gibberellin A1 + succinate + CO2. Its pathway is plant hormone biosynthesis; gibberellin biosynthesis. Functionally, converts the inactive gibberellin (GA) precursors GA9 and GA20 in the bioactives gibberellins GA4 and GA1. Involved in the production of bioactive GA for reproductive development. The polypeptide is Gibberellin 3-beta-dioxygenase 4 (Arabidopsis thaliana (Mouse-ear cress)).